Reading from the N-terminus, the 449-residue chain is UDP-N-acetylmuramoylalanine--D-glutamate ligase (449 aa).

118-124 (GTNGKTT) contributes to the ATP binding site.

The protein belongs to the MurCDEF family.

It localises to the cytoplasm. It carries out the reaction UDP-N-acetyl-alpha-D-muramoyl-L-alanine + D-glutamate + ATP = UDP-N-acetyl-alpha-D-muramoyl-L-alanyl-D-glutamate + ADP + phosphate + H(+). The protein operates within cell wall biogenesis; peptidoglycan biosynthesis. In terms of biological role, cell wall formation. Catalyzes the addition of glutamate to the nucleotide precursor UDP-N-acetylmuramoyl-L-alanine (UMA). This Staphylococcus haemolyticus (strain JCSC1435) protein is UDP-N-acetylmuramoylalanine--D-glutamate ligase.